The chain runs to 269 residues: MYEAIGHRVEDGVAEITIKLPRHRNALSVKAMQEVTDALNRAEEDDSVGAVMITGAEDAFCAGFYLREIPLDKGVAGVRDHFRIGALWWHQMIHKIIRVKRPVLAAINGVAAGGGLGISLASDMAICADSAKFVCAWHTIGIGNDTATSYSLARIVGMRRAMELMLTNRTLYPEEAKDWGLVSRVYPKDDFREVAWKVARELAAAPTHLQVMAKERFHAGWMQPVEECTEFEIQNVIASVTHPHFMPCLTEFLDGHRADRPQVELPAGV.

Residues R24 and 62-67 each bind substrate; that span reads AGFYLR. The active-site Proton acceptor is the H90. G114 contributes to the substrate binding site. D145 serves as the catalytic Nucleophile. Position 257 (R257) interacts with substrate.

It belongs to the enoyl-CoA hydratase/isomerase family. Homotetramer. Homotetramer, homooctamer and larger multimers. Homotrimer.

The enzyme catalyses 4-chlorobenzoyl-CoA + H2O = 4-hydroxybenzoyl-CoA + chloride + H(+). Its pathway is xenobiotic degradation; 4-chlorobenzoate degradation; 4-hydroxybenzoate from 4-chlorobenzoate: step 2/3. Its activity is regulated as follows. Inactivated by 1 mM Ag(+) and by 5 mM Cu(2+). Partially inhibited by 5 mM Zn(2+), Mn(2+), Co(2+), Fe(2+) and Ni(2+). Unaffected by 10 mM Na(+), K(+) and Li(+) and by 0.5 mM Mg(2+), Mn(2+), Fe(2+), Ca(2+), Co(2+) and Zn(2+). Inhibited by the sulfhydryl blocking agent 5,5'-dithio-bis-(2-nitrobenzoate), SDS and N-bromosuccinimide. Unaffected by sodium azide and EDTA. Inactivated following treatment with diethyl pyrocarbonate; this inactivation is reversible by treatment with hydroxylamine. Its function is as follows. Dehalogenates 4-chlorobenzoyl-CoA, 4-iodobenzoyl-CoA and 4-bromobenzoyl-CoA, but not 4-fluorobenzoyl-CoA. Inactive towards crotonyl-CoA, alpha-methylcrotonyl-CoA and beta-methylcrotonyl-CoA. This is 4-chlorobenzoyl coenzyme A dehalogenase from Pseudomonas sp. (strain CBS-3).